A 455-amino-acid polypeptide reads, in one-letter code: ATP-dependent protease ATPase subunit HslU (455 aa).

ATP-binding positions include isoleucine 19 and 61-66 (GVGKTE). A disordered region spans residues 144–163 (ESKVGFANEPAEDAASKKEK). Residues aspartate 268, glutamate 333, and arginine 405 each contribute to the ATP site.

The protein belongs to the ClpX chaperone family. HslU subfamily. As to quaternary structure, a double ring-shaped homohexamer of HslV is capped on each side by a ring-shaped HslU homohexamer. The assembly of the HslU/HslV complex is dependent on binding of ATP.

The protein localises to the cytoplasm. ATPase subunit of a proteasome-like degradation complex; this subunit has chaperone activity. The binding of ATP and its subsequent hydrolysis by HslU are essential for unfolding of protein substrates subsequently hydrolyzed by HslV. HslU recognizes the N-terminal part of its protein substrates and unfolds these before they are guided to HslV for hydrolysis. The protein is ATP-dependent protease ATPase subunit HslU of Francisella tularensis subsp. novicida (strain U112).